We begin with the raw amino-acid sequence, 130 residues long: Small ribosomal subunit protein uS9 (130 aa).

It belongs to the universal ribosomal protein uS9 family.

This chain is Small ribosomal subunit protein uS9, found in Shewanella pealeana (strain ATCC 700345 / ANG-SQ1).